Reading from the N-terminus, the 880-residue chain is Alanine--tRNA ligase (880 aa).

The protein belongs to the class-II aminoacyl-tRNA synthetase family.

It localises to the cytoplasm. The enzyme catalyses tRNA(Ala) + L-alanine + ATP = L-alanyl-tRNA(Ala) + AMP + diphosphate. Functionally, catalyzes the attachment of alanine to tRNA(Ala) in a two-step reaction: alanine is first activated by ATP to form Ala-AMP and then transferred to the acceptor end of tRNA(Ala). Also edits incorrectly charged Ser-tRNA(Ala) and Gly-tRNA(Ala) via its editing domain. This is Alanine--tRNA ligase (alaS) from Lactiplantibacillus plantarum (strain ATCC BAA-793 / NCIMB 8826 / WCFS1) (Lactobacillus plantarum).